A 508-amino-acid chain; its full sequence is Polyamine oxidase FMS1 (508 aa).

The protein belongs to the flavin monoamine oxidase family. It depends on FAD as a cofactor.

It catalyses the reaction spermine + O2 + H2O = 3-aminopropanal + spermidine + H2O2. It carries out the reaction spermidine + O2 + H2O = 3-aminopropanal + putrescine + H2O2. The catalysed reaction is N(1)-acetylspermine + O2 + H2O = 3-acetamidopropanal + spermidine + H2O2. The enzyme catalyses N(1)-acetylspermidine + O2 + H2O = 3-acetamidopropanal + putrescine + H2O2. It catalyses the reaction N(8)-acetylspermidine + O2 + H2O = 4-acetamidobutanal + propane-1,3-diamine + H2O2. Its function is as follows. Involved in the production of beta-alanine, a precursor of pantothenic acid. Multicopy suppressor of fenpropimorph resistance. This chain is Polyamine oxidase FMS1 (FMS1), found in Saccharomyces cerevisiae (strain ATCC 204508 / S288c) (Baker's yeast).